The primary structure comprises 668 residues: tRNA 5-methylaminomethyl-2-thiouridine biosynthesis bifunctional protein MnmC (668 aa).

The tract at residues 1-245 (MKHYSIQPAN…KREMLCGVME (245 aa)) is tRNA (mnm(5)s(2)U34)-methyltransferase. An FAD-dependent cmnm(5)s(2)U34 oxidoreductase region spans residues 270-668 (IGGGIASALL…LLKGKAVKAG (399 aa)).

This sequence in the N-terminal section; belongs to the methyltransferase superfamily. tRNA (mnm(5)s(2)U34)-methyltransferase family. In the C-terminal section; belongs to the DAO family. FAD is required as a cofactor.

It localises to the cytoplasm. It catalyses the reaction 5-aminomethyl-2-thiouridine(34) in tRNA + S-adenosyl-L-methionine = 5-methylaminomethyl-2-thiouridine(34) in tRNA + S-adenosyl-L-homocysteine + H(+). Its function is as follows. Catalyzes the last two steps in the biosynthesis of 5-methylaminomethyl-2-thiouridine (mnm(5)s(2)U) at the wobble position (U34) in tRNA. Catalyzes the FAD-dependent demodification of cmnm(5)s(2)U34 to nm(5)s(2)U34, followed by the transfer of a methyl group from S-adenosyl-L-methionine to nm(5)s(2)U34, to form mnm(5)s(2)U34. The sequence is that of tRNA 5-methylaminomethyl-2-thiouridine biosynthesis bifunctional protein MnmC from Shigella dysenteriae serotype 1 (strain Sd197).